The primary structure comprises 138 residues: ATP synthase epsilon chain (138 aa).

It belongs to the ATPase epsilon chain family. F-type ATPases have 2 components, CF(1) - the catalytic core - and CF(0) - the membrane proton channel. CF(1) has five subunits: alpha(3), beta(3), gamma(1), delta(1), epsilon(1). CF(0) has three main subunits: a, b and c.

The protein resides in the cell membrane. In terms of biological role, produces ATP from ADP in the presence of a proton gradient across the membrane. The chain is ATP synthase epsilon chain from Streptococcus gordonii (strain Challis / ATCC 35105 / BCRC 15272 / CH1 / DL1 / V288).